We begin with the raw amino-acid sequence, 309 residues long: MVCQHNDELEALVKKAKKVTDKGEVASYIPALAKADKHDLSVAIYYSNNVCLSAGDVEKTFTLQSISKVLSLALVLMEYGKDKVFSYVGQEPTGDPFNSIIKLETVNPSKPLNPMINAGALVVTSLIRGRTVKERLDYLLSFIRRLTNNQEITYCREVAESEYSTSMINRAMCYYMKQYGIFEDDVEAVMDLYTKQCAIEMNSLDLAKIGSVFALNGRHPETGEQVISKDVARICKTFMVTCGMYNASGEFAIKVGIPAKSGVSGGIMGISPYDFGIGIFGPALDEKGNSIAGVKLLEIMSEMYRLSIF.

Positions 65, 117, 162, 169, 193, 245, and 263 each coordinate substrate.

The protein belongs to the glutaminase family. As to quaternary structure, homotetramer.

The enzyme catalyses L-glutamine + H2O = L-glutamate + NH4(+). The chain is Glutaminase 2 from Bacillus subtilis (strain 168).